The primary structure comprises 466 residues: MKRFYIHTIGCQMNVYDSSQLSAILTAMGHRSVNAPEQADLVFVNTCTIRAKAKQKATSFVGRLAAMKRARPDMIVGVGGCLAQEEGRQLLDAFPCVDIVFGTHALGRLPGHIQAVAHQGDRIVDVEMTAAIDESVHALQGPDSSGVTGFITIMRGCDNFCTYCVVPYVRGRETSRAPEHILDEIRARVAGGLREITLLGQNVNSYGQKEGLCSFADLLARVNEIDGLHRIRFTTSHPKDLSPELAAAFTSLDKLCSHVHLPAQSGSDAVLKRMNRRYTRQAYLEKLHWLREAQPGMALSTDIIVGFPGETEQDFLQTLDLIEKVRYDSIFAFMYSDRPLAPARAFDGKVDEAEKQQRIYALLELQNRITAEKNRALEGRVEQVLVEGKSKSSGRNDITADTVQWTGRTTCNRVANFTVPRELASGNAVGPGAMVRVEIMSGLAHSLSGIAVGVEKPGAGGDAHAA.

In terms of domain architecture, MTTase N-terminal spans 2–118 (KRFYIHTIGC…LPGHIQAVAH (117 aa)). Residues Cys-11, Cys-47, Cys-81, Cys-157, Cys-161, and Cys-164 each coordinate [4Fe-4S] cluster. The Radical SAM core domain maps to 143-372 (DSSGVTGFIT…LELQNRITAE (230 aa)). The 79-residue stretch at 375 to 453 (RALEGRVEQV…AHSLSGIAVG (79 aa)) folds into the TRAM domain.

Belongs to the methylthiotransferase family. MiaB subfamily. As to quaternary structure, monomer. [4Fe-4S] cluster serves as cofactor.

Its subcellular location is the cytoplasm. It carries out the reaction N(6)-dimethylallyladenosine(37) in tRNA + (sulfur carrier)-SH + AH2 + 2 S-adenosyl-L-methionine = 2-methylsulfanyl-N(6)-dimethylallyladenosine(37) in tRNA + (sulfur carrier)-H + 5'-deoxyadenosine + L-methionine + A + S-adenosyl-L-homocysteine + 2 H(+). Its function is as follows. Catalyzes the methylthiolation of N6-(dimethylallyl)adenosine (i(6)A), leading to the formation of 2-methylthio-N6-(dimethylallyl)adenosine (ms(2)i(6)A) at position 37 in tRNAs that read codons beginning with uridine. The sequence is that of tRNA-2-methylthio-N(6)-dimethylallyladenosine synthase from Desulfosudis oleivorans (strain DSM 6200 / JCM 39069 / Hxd3) (Desulfococcus oleovorans).